Consider the following 383-residue polypeptide: Erythronate-4-phosphate dehydrogenase (383 aa).

Substrate-binding residues include Ser-45 and Thr-66. NAD(+) is bound by residues Asp-146, Thr-174, 205-207 (ASR), and Asp-231. Arg-207 is a catalytic residue. Glu-236 is an active-site residue. The active-site Proton donor is His-253. Gly-256 is an NAD(+) binding site. Tyr-257 is a binding site for substrate.

It belongs to the D-isomer specific 2-hydroxyacid dehydrogenase family. PdxB subfamily. As to quaternary structure, homodimer.

It is found in the cytoplasm. It catalyses the reaction 4-phospho-D-erythronate + NAD(+) = (R)-3-hydroxy-2-oxo-4-phosphooxybutanoate + NADH + H(+). Its pathway is cofactor biosynthesis; pyridoxine 5'-phosphate biosynthesis; pyridoxine 5'-phosphate from D-erythrose 4-phosphate: step 2/5. In terms of biological role, catalyzes the oxidation of erythronate-4-phosphate to 3-hydroxy-2-oxo-4-phosphonooxybutanoate. This is Erythronate-4-phosphate dehydrogenase from Pseudomonas entomophila (strain L48).